The chain runs to 283 residues: Polyamine aminopropyltransferase (283 aa).

Residues 2-237 (ELWYTEEHTD…GHWLFGFASK (236 aa)) form the PABS domain. Position 31 (Q31) interacts with S-methyl-5'-thioadenosine. Spermidine-binding residues include H62 and D86. S-methyl-5'-thioadenosine-binding positions include E106 and 137-138 (DG). Residue D155 is the Proton acceptor of the active site. 155–158 (DSTD) serves as a coordination point for spermidine. P162 lines the S-methyl-5'-thioadenosine pocket.

It belongs to the spermidine/spermine synthase family. As to quaternary structure, homodimer or homotetramer.

The protein localises to the cytoplasm. The catalysed reaction is S-adenosyl 3-(methylsulfanyl)propylamine + putrescine = S-methyl-5'-thioadenosine + spermidine + H(+). The protein operates within amine and polyamine biosynthesis; spermidine biosynthesis; spermidine from putrescine: step 1/1. In terms of biological role, catalyzes the irreversible transfer of a propylamine group from the amino donor S-adenosylmethioninamine (decarboxy-AdoMet) to putrescine (1,4-diaminobutane) to yield spermidine. The chain is Polyamine aminopropyltransferase from Clostridium perfringens (strain 13 / Type A).